A 502-amino-acid polypeptide reads, in one-letter code: Cytochrome P450 71B20 (502 aa).

Residues 1–21 (MAISFLCFCLITLASLIFFAK) traverse the membrane as a helical segment. Cys444 contributes to the heme binding site.

It belongs to the cytochrome P450 family. Heme serves as cofactor.

The protein resides in the membrane. This is Cytochrome P450 71B20 (CYP71B20) from Arabidopsis thaliana (Mouse-ear cress).